The following is a 150-amino-acid chain: Protein E6 (150 aa).

2 zinc fingers span residues 31–67 and 104–140; these read CIWC…CAFC and CALC…CTHC.

This sequence belongs to the papillomaviridae E6 protein family. In terms of assembly, forms homodimers. Interacts with ubiquitin-protein ligase UBE3A/E6-AP; this interaction stimulates UBE3A ubiquitin activity. Interacts with host TP53 and EP300; this interaction inhibits TP53 activity.

It localises to the host cytoplasm. The protein resides in the host nucleus. Plays a major role in the induction and maintenance of cellular transformation. E6 associates with host UBE3A/E6-AP ubiquitin-protein ligase and modulates its activity. Sequesters tumor suppressor TP53 in the host cytoplasm and modulates its activity by interacting with host EP300 that results in the reduction of TP53 acetylation and activation. In turn, apoptosis induced by DNA damage is inhibited. E6 also protects host keratinocytes from apoptosis by mediating the degradation of host BAK1. May also inhibit host immune response. This chain is Protein E6, found in Homo sapiens (Human).